The chain runs to 847 residues: Follistatin-related protein 5 (847 aa).

The first 20 residues, 1–20 (MFRCWSAILILGFIFLASEG), serve as a signal peptide directing secretion. The 55-residue stretch at 81 to 135 (ETRHAECACMDLCKQHYKPVCGSDGEFYENHCEVHRAACLKKQKITIVHNEDCFF) folds into the Kazal-like domain. 3 disulfide bridges follow: Cys-87–Cys-119, Cys-93–Cys-112, and Cys-101–Cys-133. EF-hand domains follow at residues 175–210 (RKKPLVDQMFKYFDADSNGLVDINELTQVIKQEELN) and 211–246 (KDLSDCTLYDLLKYDDFNADKHLALEEFYRAFQVIQ). Residues Asp-188, Asp-190, Asn-192, Glu-199, Asp-226, Asn-228, Asp-230, His-232, and Glu-237 each contribute to the Ca(2+) site. Ig-like domains lie at 250–338 (PEDQ…FQVN) and 341–426 (PVIR…EDIS). Disulfide bonds link Cys-270/Cys-321 and Cys-362/Cys-413. N-linked (GlcNAc...) asparagine glycosylation is found at Asn-318 and Asn-394.

It is found in the secreted. This is Follistatin-related protein 5 (Fstl5) from Mus musculus (Mouse).